The primary structure comprises 681 residues: DNA-directed RNA polymerase subunit beta' (681 aa).

4 residues coordinate Zn(2+): cysteine 69, cysteine 71, cysteine 87, and cysteine 90. Mg(2+) contacts are provided by aspartate 489, aspartate 491, and aspartate 493.

Belongs to the RNA polymerase beta' chain family. RpoC1 subfamily. In plastids the minimal PEP RNA polymerase catalytic core is composed of four subunits: alpha, beta, beta', and beta''. When a (nuclear-encoded) sigma factor is associated with the core the holoenzyme is formed, which can initiate transcription. Mg(2+) serves as cofactor. Requires Zn(2+) as cofactor.

The protein localises to the plastid. The protein resides in the chloroplast. It carries out the reaction RNA(n) + a ribonucleoside 5'-triphosphate = RNA(n+1) + diphosphate. In terms of biological role, DNA-dependent RNA polymerase catalyzes the transcription of DNA into RNA using the four ribonucleoside triphosphates as substrates. The protein is DNA-directed RNA polymerase subunit beta' of Nicotiana sylvestris (Wood tobacco).